A 126-amino-acid chain; its full sequence is Fluoride-specific ion channel FluC (126 aa).

A run of 4 helical transmembrane segments spans residues 4 to 24 (PLLSIALGSVLGAWLRWLLGL), 33 to 53 (IPLGTVTVNLAGGFIIGFAMA), 67 to 87 (FVITGFCGALTTFSTFSIEIV), and 97 to 117 (MAMLAISIHLIGSLIFTCLGL). Residues Gly74 and Thr77 each coordinate Na(+).

It belongs to the fluoride channel Fluc/FEX (TC 1.A.43) family.

It localises to the cell inner membrane. The enzyme catalyses fluoride(in) = fluoride(out). With respect to regulation, na(+) is not transported, but it plays an essential structural role and its presence is essential for fluoride channel function. Fluoride-specific ion channel. Important for reducing fluoride concentration in the cell, thus reducing its toxicity. This Acinetobacter baumannii (strain ACICU) protein is Fluoride-specific ion channel FluC.